Here is a 53-residue protein sequence, read N- to C-terminus: Light-harvesting protein B-800/850 alpha chain (53 aa).

Residues 1 to 14 are Cytoplasmic-facing; that stretch reads MNQGKIWTVVNPSV. The chain crosses the membrane as a helical span at residues 15–35; sequence GLPLLLGSVTVIAILVHAAVL. His-31 provides a ligand contact to a bacteriochlorophyll. Residues 36–53 lie on the Periplasmic side of the membrane; sequence SHTTWFPAYWQGGLKKAA.

This sequence belongs to the antenna complex alpha subunit family. The core complex is formed by different alpha and beta chains, binding bacteriochlorophyll molecules, and arranged most probably in tetrameric structures disposed around the reaction center. The non-pigmented gamma chains may constitute additional components.

The protein localises to the cell inner membrane. In terms of biological role, antenna complexes are light-harvesting systems, which transfer the excitation energy to the reaction centers. This is Light-harvesting protein B-800/850 alpha chain from Rhodoblastus acidophilus (Rhodopseudomonas acidophila).